Here is a 350-residue protein sequence, read N- to C-terminus: Spermidine/putrescine import ATP-binding protein PotA (350 aa).

Residues 6-236 enclose the ABC transporter domain; it reads LELRNVTKDY…PENLWVAKFI (231 aa). 38–45 is a binding site for ATP; that stretch reads GPSGCGKT.

This sequence belongs to the ABC transporter superfamily. Spermidine/putrescine importer (TC 3.A.1.11.1) family. The complex is composed of two ATP-binding proteins (PotA), two transmembrane proteins (PotB and PotC) and a solute-binding protein (PotD).

Its subcellular location is the cell membrane. It catalyses the reaction ATP + H2O + polyamine-[polyamine-binding protein]Side 1 = ADP + phosphate + polyamineSide 2 + [polyamine-binding protein]Side 1.. Part of the ABC transporter complex PotABCD involved in spermidine/putrescine import. Responsible for energy coupling to the transport system. The protein is Spermidine/putrescine import ATP-binding protein PotA of Mesoplasma florum (strain ATCC 33453 / NBRC 100688 / NCTC 11704 / L1) (Acholeplasma florum).